Reading from the N-terminus, the 210-residue chain is Peptidyl-tRNA hydrolase (210 aa).

Residue Tyr14 coordinates tRNA. The Proton acceptor role is filled by His19. The tRNA site is built by Phe64, Asn66, and Asn112.

The protein belongs to the PTH family. In terms of assembly, monomer.

The protein resides in the cytoplasm. It carries out the reaction an N-acyl-L-alpha-aminoacyl-tRNA + H2O = an N-acyl-L-amino acid + a tRNA + H(+). Its function is as follows. Hydrolyzes ribosome-free peptidyl-tRNAs (with 1 or more amino acids incorporated), which drop off the ribosome during protein synthesis, or as a result of ribosome stalling. In terms of biological role, catalyzes the release of premature peptidyl moieties from peptidyl-tRNA molecules trapped in stalled 50S ribosomal subunits, and thus maintains levels of free tRNAs and 50S ribosomes. This chain is Peptidyl-tRNA hydrolase, found in Methylorubrum extorquens (strain CM4 / NCIMB 13688) (Methylobacterium extorquens).